Reading from the N-terminus, the 118-residue chain is Non-specific lipid-transfer protein 2A (118 aa).

The N-terminal stretch at 1-26 is a signal peptide; it reads MARAQLVLVALVAAALLLAGPHTTMA. 4 disulfide bridges follow: Cys30–Cys77, Cys40–Cys54, Cys55–Cys100, and Cys75–Cys114.

This sequence belongs to the plant LTP family.

Functionally, plant non-specific lipid-transfer proteins transfer phospholipids as well as galactolipids across membranes. May play a role in wax or cutin deposition in the cell walls of expanding epidermal cells and certain secretory tissues. The sequence is that of Non-specific lipid-transfer protein 2A (LTP2-A) from Oryza sativa subsp. japonica (Rice).